We begin with the raw amino-acid sequence, 555 residues long: Glutamate--tRNA ligase (555 aa).

Residues 100-110 carry the 'HIGH' region motif; sequence PNPSGPLHIGH.

Belongs to the class-I aminoacyl-tRNA synthetase family. Glutamate--tRNA ligase type 2 subfamily.

It is found in the cytoplasm. It carries out the reaction tRNA(Glu) + L-glutamate + ATP = L-glutamyl-tRNA(Glu) + AMP + diphosphate. Its function is as follows. Catalyzes the attachment of glutamate to tRNA(Glu) in a two-step reaction: glutamate is first activated by ATP to form Glu-AMP and then transferred to the acceptor end of tRNA(Glu). This Methanococcus maripaludis (strain C7 / ATCC BAA-1331) protein is Glutamate--tRNA ligase.